Reading from the N-terminus, the 250-residue chain is DNA repair protein RecO (250 aa).

Belongs to the RecO family.

In terms of biological role, involved in DNA repair and RecF pathway recombination. This Lactobacillus helveticus (strain DPC 4571) protein is DNA repair protein RecO.